The sequence spans 289 residues: Inorganic pyrophosphatase (289 aa).

S2 carries the post-translational modification N-acetylserine. An N6-acetyllysine modification is found at K57. Mg(2+)-binding residues include D116, D121, and D153. K228 bears the N6-acetyllysine mark. S250 is subject to Phosphoserine.

The protein belongs to the PPase family. As to quaternary structure, homodimer. It depends on Mg(2+) as a cofactor.

The protein resides in the cytoplasm. It catalyses the reaction diphosphate + H2O = 2 phosphate + H(+). This is Inorganic pyrophosphatase (PPA1) from Macaca fascicularis (Crab-eating macaque).